Here is a 1363-residue protein sequence, read N- to C-terminus: Zinc finger protein 541 (1363 aa).

Disordered regions lie at residues 1–23 (MEPYSLGEEGALPSEGHLPSFSE) and 106–137 (LGALKVPKEADEGGRATGSTRKGKRQHSSPQN). 3 consecutive C2H2-type zinc fingers follow at residues 140–162 (LDCSLCGKVFSSASSLSKHYLTH), 168–190 (HVCKVCSKAFKRQDHLTGHMLTH), and 196–221 (FVCIEQGCSKSYCDYRSLRRHYEVQH). Disordered stretches follow at residues 232 to 269 (EEEAYGDPTHNHDVANQPPPSGLRSLGPPEARSPGSVL), 286 to 387 (KIPS…GWPE), 440 to 532 (VASR…PGGL), and 574 to 741 (QVAT…GYRL). The span at 311-321 (SLGSSSCTPAS) shows a compositional bias: polar residues. Basic and acidic residues predominate over residues 335 to 345 (EETHPPRKEAA). Residues 453 to 465 (PSSTPTSVEPSPS) are compositionally biased toward low complexity. Residues 597 to 608 (GPWPPQTLPPAP) show a composition bias toward pro residues. Low complexity predominate over residues 659-670 (PPSLTGPGLLPS). The segment at 838 to 860 (FVCKNCSQMFYTEKGLSSHMCFH) adopts a C2H2-type 4 zinc-finger fold. The tract at residues 935-978 (QGQEKDGEERDSKESCQYRKRKKRPQPKALFAPPAPSALGEPGP) is disordered. Residues 937–951 (QEKDGEERDSKESCQ) are compositionally biased toward basic and acidic residues. Positions 1063–1155 (PHINVGSRFQ…VALETLLLRG (93 aa)) constitute an ELM2 domain. Residues 1170 to 1221 (TGSDIWTPMEKRLFKKAFCAHKKDFYLIHKMIQTKSVAQCVEYYYIWKKMVK) enclose the SANT domain. The tract at residues 1243–1298 (RTEDKVTCSPRERPTHRPTPELKIKTKSYRRESILHSSPSAAPKRTPEPPGSVESQ) is disordered. The span at 1244–1276 (TEDKVTCSPRERPTHRPTPELKIKTKSYRRESI) shows a compositional bias: basic and acidic residues. The C2H2-type 5 zinc-finger motif lies at 1301-1323 (FPCRECERVFDKIKSRNAHMKRH). The disordered stretch occupies residues 1343 to 1363 (LKEEEEEEEEELGADMGPLQW). The segment covering 1345 to 1355 (EEEEEEEEELG) has biased composition (acidic residues).

As to quaternary structure, interacts with DNTTIP1. Identified in a complex with KCTD19, HDAC1 and HSPA2. Identified in a complex with HDAC1, HDAC2, DNTTIP1 and KCTD19. Identified in a complex with KCTD19 and HDAC1. Germ-cell-specific. Specifically present in testicular spermatogenic cells, but not in testicular and mature sperm. During spermatogenesis, it is present in spermatocytes and round spermatids only (at protein level).

Its subcellular location is the nucleus. In terms of biological role, transcription regulator which is essential for male fertility and for the completion of meiotic prophase in spermatocytes. Regulates progression of the pachytene stage of meiotic prophase by activating the expression of genes involved in meiosis and post-meiosis during spermatogenesis. Maintains the repression of pre-pachytene transcriptional programs, including meiotic double-strand breaks (DSB) formation genes in pachytene spermatocytes and suppresses aberrant DSB formation after mid-pachytene, thus ensuring meiosis progression. The polypeptide is Zinc finger protein 541 (Znf541) (Mus musculus (Mouse)).